The sequence spans 372 residues: Secreted beta-glucosidase SIM1 (372 aa).

An N-terminal signal peptide occupies residues 1-15; it reads MKYLTLLTVLSTALA. A disordered region spans residues 51-85; that stretch reads VTENASSGASSGETAETIQTRSSSDVSSSSDSNPV. The span at 52-85 shows a compositional bias: low complexity; the sequence is TENASSGASSGETAETIQTRSSSDVSSSSDSNPV. 2 N-linked (GlcNAc...) asparagine glycosylation sites follow: Asn-54 and Asn-351.

It belongs to the SUN family.

The protein resides in the secreted. The protein localises to the cell wall. Functionally, cell surface beta-glucosidase involved in cell wall maintenance and cytokinesis. Plays a role redundant to SUN41. In Candida albicans (strain SC5314 / ATCC MYA-2876) (Yeast), this protein is Secreted beta-glucosidase SIM1 (SIM1).